The following is a 358-amino-acid chain: Alanine racemase (358 aa).

Catalysis depends on Lys-35, which acts as the Proton acceptor; specific for D-alanine. Lys-35 carries the post-translational modification N6-(pyridoxal phosphate)lysine. Arg-130 provides a ligand contact to substrate. Catalysis depends on Tyr-255, which acts as the Proton acceptor; specific for L-alanine. Met-303 is a substrate binding site.

This sequence belongs to the alanine racemase family. The cofactor is pyridoxal 5'-phosphate.

It carries out the reaction L-alanine = D-alanine. It participates in amino-acid biosynthesis; D-alanine biosynthesis; D-alanine from L-alanine: step 1/1. Its function is as follows. Catalyzes the interconversion of L-alanine and D-alanine. May also act on other amino acids. The sequence is that of Alanine racemase (alr) from Shewanella sp. (strain MR-4).